Consider the following 375-residue polypeptide: 4-hydroxy-3-methylbut-2-en-1-yl diphosphate synthase (flavodoxin) (375 aa).

Residues Cys270, Cys273, Cys305, and Glu312 each contribute to the [4Fe-4S] cluster site.

Belongs to the IspG family. [4Fe-4S] cluster serves as cofactor.

It carries out the reaction (2E)-4-hydroxy-3-methylbut-2-enyl diphosphate + oxidized [flavodoxin] + H2O + 2 H(+) = 2-C-methyl-D-erythritol 2,4-cyclic diphosphate + reduced [flavodoxin]. Its pathway is isoprenoid biosynthesis; isopentenyl diphosphate biosynthesis via DXP pathway; isopentenyl diphosphate from 1-deoxy-D-xylulose 5-phosphate: step 5/6. Functionally, converts 2C-methyl-D-erythritol 2,4-cyclodiphosphate (ME-2,4cPP) into 1-hydroxy-2-methyl-2-(E)-butenyl 4-diphosphate. This Yersinia pseudotuberculosis serotype IB (strain PB1/+) protein is 4-hydroxy-3-methylbut-2-en-1-yl diphosphate synthase (flavodoxin).